Reading from the N-terminus, the 156-residue chain is Phosphopantetheine adenylyltransferase (156 aa).

Thr-9 contacts substrate. ATP contacts are provided by residues 9 to 10 and His-17; that span reads TF. Positions 41, 73, and 87 each coordinate substrate. Residues 88–90, Glu-98, and 123–129 each bind ATP; these read GVR and WAFVSST.

The protein belongs to the bacterial CoaD family. Homohexamer. Mg(2+) serves as cofactor.

The protein resides in the cytoplasm. The enzyme catalyses (R)-4'-phosphopantetheine + ATP + H(+) = 3'-dephospho-CoA + diphosphate. Its pathway is cofactor biosynthesis; coenzyme A biosynthesis; CoA from (R)-pantothenate: step 4/5. Reversibly transfers an adenylyl group from ATP to 4'-phosphopantetheine, yielding dephospho-CoA (dPCoA) and pyrophosphate. This chain is Phosphopantetheine adenylyltransferase, found in Haemophilus influenzae (strain ATCC 51907 / DSM 11121 / KW20 / Rd).